The primary structure comprises 906 residues: Cadherin-2 (906 aa).

A signal peptide spans 1–25 (MCRIAGAPRTLLPLLAALLQASVEA). A propeptide spanning residues 26 to 159 (SGEIALCKTG…HNGYLQRQKR (134 aa)) is cleaved from the precursor. Phosphoserine occurs at positions 96 and 135. 5 consecutive Cadherin domains span residues 160–267 (DWVI…RPEF), 268–382 (LHQV…PPEF), 383–497 (TAMT…NPYF), 498–603 (APNP…DNAP), and 604–714 (QVLP…DVDR). Topologically, residues 160 to 724 (DWVIPPINLP…IVGAGLGTGA (565 aa)) are extracellular. Glutamate 170 serves as a coordination point for Ca(2+). An N-linked (GlcNAc...) asparagine glycan is attached at asparagine 190. Ca(2+) is bound by residues aspartate 226, glutamate 228, aspartate 259, methionine 260, asparagine 261, aspartate 262, and asparagine 263. Asparagine 273 carries N-linked (GlcNAc...) asparagine glycosylation. Ca(2+) contacts are provided by aspartate 293, aspartate 295, and asparagine 301. The N-linked (GlcNAc...) asparagine glycan is linked to asparagine 325. Ca(2+) is bound at residue aspartate 353. Asparagine 402, asparagine 572, asparagine 622, asparagine 651, and asparagine 692 each carry an N-linked (GlcNAc...) asparagine glycan. Residues 725 to 745 (IIAILLCIIILLILVLMFVVW) form a helical membrane-spanning segment. Topologically, residues 746–906 (MKRRDKERQA…LAEMYGGGDD (161 aa)) are cytoplasmic. The segment covering 863–880 (SGSTAGSLSSLNSSSSGG) has biased composition (low complexity). A disordered region spans residues 863 to 884 (SGSTAGSLSSLNSSSSGGEQDY).

Homodimer (via extracellular region). Can also form heterodimers with other cadherins (via extracellular region). Dimerization occurs in trans, i.e. with a cadherin chain from another cell. Interacts with CDCP1. Interacts with PCDH8; this complex may also include TAOK2. The interaction with PCDH8 may lead to internalization through TAOK2/p38 MAPK pathway. Identified in a complex containing FGFR4, NCAM1, CDH2, PLCG1, FRS2, SRC, SHC1, GAP43 and CTTN. May interact with OBSCN (via protein kinase domain 2). Interacts with FBXO45. Post-translationally, cleaved by MMP24. Ectodomain cleavage leads to the generation of a soluble 90 kDa N-terminal soluble fragment and a 45 kDa membrane-bound C-terminal fragment 1 (CTF1), which is further cleaved by gamma-secretase into a 35 kDa. Cleavage in neural stem cells by MMP24 affects CDH2-mediated anchorage of neural stem cells to ependymocytes in the adult subependymal zone, leading to modulate neural stem cell quiescence. May be phosphorylated by OBSCN.

Its subcellular location is the cell membrane. The protein localises to the sarcolemma. The protein resides in the cell junction. It localises to the cell surface. It is found in the desmosome. Its subcellular location is the adherens junction. Calcium-dependent cell adhesion protein; preferentially mediates homotypic cell-cell adhesion by dimerization with a CDH2 chain from another cell. Cadherins may thus contribute to the sorting of heterogeneous cell types. Acts as a regulator of neural stem cells quiescence by mediating anchorage of neural stem cells to ependymocytes in the adult subependymal zone: upon cleavage by MMP24, CDH2-mediated anchorage is affected, leading to modulate neural stem cell quiescence. Plays a role in cell-to-cell junction formation between pancreatic beta cells and neural crest stem (NCS) cells, promoting the formation of processes by NCS cells. Required for proper neurite branching. Required for pre- and postsynaptic organization. CDH2 may be involved in neuronal recognition mechanism. In hippocampal neurons, may regulate dendritic spine density. The sequence is that of Cadherin-2 (CDH2) from Otolemur garnettii (Small-eared galago).